Reading from the N-terminus, the 255-residue chain is Large ribosomal subunit protein eL8 (255 aa).

The span at 1–16 (MPKAPKKITKPKKAEK) shows a compositional bias: basic residues. The tract at residues 1–28 (MPKAPKKITKPKKAEKKKNPLFQAKPRS) is disordered.

Belongs to the eukaryotic ribosomal protein eL8 family.

The chain is Large ribosomal subunit protein eL8 (RPL7A) from Tetrahymena thermophila.